Here is a 152-residue protein sequence, read N- to C-terminus: Small ribosomal subunit protein uS13 (152 aa).

This sequence belongs to the universal ribosomal protein uS13 family. As to quaternary structure, component of the small ribosomal subunit.

Its subcellular location is the cytoplasm. Functionally, component of the small ribosomal subunit. The ribosome is a large ribonucleoprotein complex responsible for the synthesis of proteins in the cell. Plays an essential role in early embryonic development. The polypeptide is Small ribosomal subunit protein uS13 (rps18) (Danio rerio (Zebrafish)).